The chain runs to 367 residues: Phosphoribosylaminoimidazole-succinocarboxamide synthase (367 aa).

The protein belongs to the SAICAR synthetase family.

It catalyses the reaction 5-amino-1-(5-phospho-D-ribosyl)imidazole-4-carboxylate + L-aspartate + ATP = (2S)-2-[5-amino-1-(5-phospho-beta-D-ribosyl)imidazole-4-carboxamido]succinate + ADP + phosphate + 2 H(+). It functions in the pathway purine metabolism; IMP biosynthesis via de novo pathway; 5-amino-1-(5-phospho-D-ribosyl)imidazole-4-carboxamide from 5-amino-1-(5-phospho-D-ribosyl)imidazole-4-carboxylate: step 1/2. This Shewanella sp. (strain ANA-3) protein is Phosphoribosylaminoimidazole-succinocarboxamide synthase.